Reading from the N-terminus, the 205-residue chain is Glycerol-3-phosphate acyltransferase (205 aa).

The next 5 membrane-spanning stretches (helical) occupy residues 4–24 (IAPGMILFAYLCGSISSAILV), 56–76 (VAVLIFDVLKGMLPVWGAYAL), 81–101 (FWLGLIAIAACLGHIWPVFFG), 112–132 (FGAIAPIGWDLTGVMAGTWLL), and 138–158 (GYSSLGAIVSALIAPFYVWWF).

Belongs to the PlsY family. Probably interacts with PlsX.

Its subcellular location is the cell inner membrane. The enzyme catalyses an acyl phosphate + sn-glycerol 3-phosphate = a 1-acyl-sn-glycero-3-phosphate + phosphate. The protein operates within lipid metabolism; phospholipid metabolism. Functionally, catalyzes the transfer of an acyl group from acyl-phosphate (acyl-PO(4)) to glycerol-3-phosphate (G3P) to form lysophosphatidic acid (LPA). This enzyme utilizes acyl-phosphate as fatty acyl donor, but not acyl-CoA or acyl-ACP. The sequence is that of Glycerol-3-phosphate acyltransferase from Citrobacter koseri (strain ATCC BAA-895 / CDC 4225-83 / SGSC4696).